The sequence spans 326 residues: tRNA(Ile)-lysidine synthase (326 aa).

Residue 33 to 38 (SGGPDS) coordinates ATP.

It belongs to the tRNA(Ile)-lysidine synthase family.

Its subcellular location is the cytoplasm. It carries out the reaction cytidine(34) in tRNA(Ile2) + L-lysine + ATP = lysidine(34) in tRNA(Ile2) + AMP + diphosphate + H(+). In terms of biological role, ligates lysine onto the cytidine present at position 34 of the AUA codon-specific tRNA(Ile) that contains the anticodon CAU, in an ATP-dependent manner. Cytidine is converted to lysidine, thus changing the amino acid specificity of the tRNA from methionine to isoleucine. The chain is tRNA(Ile)-lysidine synthase from Novosphingobium aromaticivorans (strain ATCC 700278 / DSM 12444 / CCUG 56034 / CIP 105152 / NBRC 16084 / F199).